The sequence spans 201 residues: uncharacterized protein (201 aa).

The segment covering 64-78 (DNEIKEEEESEEEEK) has biased composition (acidic residues). Disordered regions lie at residues 64–114 (DNEI…FKNA) and 182–201 (ILPG…LSKQ). The segment covering 96 to 106 (RNKHGRNRNPR) has biased composition (basic residues). Residues 189–201 (GNTETVDQGLSKQ) are compositionally biased toward polar residues.

This is an uncharacterized protein from Ostreid herpesvirus 1 (isolate France) (OsHV-1).